Reading from the N-terminus, the 345-residue chain is MDVLSAVLLALLLIGANAFFVGAEFALISARRDRLEALAEQGKATAVTVIRAGEQLPAMLTGAQLGVTVSSILLGRVGEPAVVKLLQLSFGLSGVPPALLHTLSLAIVVALHVLLGEMVPKNIALAGPERTAMLLVPPYLVYVRLARPFIAFYNNCANAILRLVGVQPKDELDIAVSTAELSEMIAESLSEGLLDHEEHTRLTRALRIRTRLVADVAVPLVNIRAVQVSAVGSGPTIGGVEQALAQTGYSRFPVVDRGGRFIGYLHIKDVLTLGDNPQTVIDLAVVRPLPRVPQSLPLADALSRMRRINSHLALVTADNGSVVGMVALEDVVEDLVGTMRDGTHR.

The 198-residue stretch at 1–198 (MDVLSAVLLA…LSEGLLDHEE (198 aa)) folds into the CNNM transmembrane domain. 2 helical membrane-spanning segments follow: residues 3–23 (VLSA…FVGA) and 95–115 (VPPA…HVLL). 2 CBS domains span residues 217-280 (AVPL…PQTV) and 285-342 (VVRP…MRDG). The helical transmembrane segment at 312–332 (LALVTADNGSVVGMVALEDVV) threads the bilayer.

It belongs to the TerC family.

It localises to the cell membrane. This is an uncharacterized protein from Mycobacterium tuberculosis (strain ATCC 25618 / H37Rv).